The sequence spans 1209 residues: Sterol 3-beta-glucosyltransferase (1209 aa).

A GRAM 1 domain is found at 167-217 (ERLIKKFLPNDDEKYIEEYPCWLLRDIMIQGHAYLTNKHLFFFAFIPNFES). The region spanning 218–315 (DFNVTGSLRL…WVSSIKKQMF (98 aa)) is the PH domain. A GRAM 2 domain is found at 568–634 (VRFRQHFSFD…EDVENCYKET (67 aa)). Positions 745, 746, 748, 1019, 1048, 1050, 1063, 1066, 1067, 1068, 1087, and 1088 each coordinate UDP-alpha-D-glucose. The tract at residues 1186-1209 (AKGNEKEEYSSEGSGSNDGSWLLI) is disordered. The segment covering 1196–1209 (SEGSGSNDGSWLLI) has biased composition (low complexity).

This sequence belongs to the glycosyltransferase 28 family.

It is found in the cytoplasm. The protein resides in the membrane. The enzyme catalyses a sterol + UDP-alpha-D-glucose = a sterol 3-beta-D-glucoside + UDP + H(+). It catalyses the reaction ergosterol + UDP-alpha-D-glucose = ergosteryl 3-beta-D-glucoside + UDP + H(+). Sterol glycosyltransferase responsible for the glycosylation of ergosterol to form ergosterol-glucoside. In Kluyveromyces lactis (strain ATCC 8585 / CBS 2359 / DSM 70799 / NBRC 1267 / NRRL Y-1140 / WM37) (Yeast), this protein is Sterol 3-beta-glucosyltransferase.